A 733-amino-acid chain; its full sequence is Arginine decarboxylase 1A, chloroplastic (733 aa).

A chloroplast-targeting transit peptide spans 1–44 (MPALGCCVDAAVSPPPGYSFLWDSSLPAPEIFPSGVPPSTNTAV). The residue at position 157 (lysine 157) is an N6-(pyridoxal phosphate)lysine. Pyridoxal 5'-phosphate contacts are provided by residues serine 309, glycine 346, and 395–398 (ESGR). Residue 460–461 (YA) coordinates substrate. Cysteine 548 (proton donor; shared with dimeric partner) is an active-site residue. Aspartate 549 is a substrate binding site. Tyrosine 592 serves as a coordination point for pyridoxal 5'-phosphate.

The protein belongs to the Orn/Lys/Arg decarboxylase class-II family. SpeA subfamily. Interacts, via its C-terminal internal region, with the tobacco mosaic virus (TMV) replicase helicase region. Mg(2+) is required as a cofactor. Pyridoxal 5'-phosphate serves as cofactor.

The protein localises to the plastid. It localises to the chloroplast. It catalyses the reaction L-arginine + H(+) = agmatine + CO2. The protein operates within alkaloid biosynthesis; nicotine biosynthesis. It functions in the pathway amine and polyamine biosynthesis; agmatine biosynthesis; agmatine from L-arginine: step 1/1. Its function is as follows. Involved in the biosynthesis of pyridine alkaloid natural products, leading mainly to the production of anabasine, anatabine, nicotine and nornicotine, effective deterrents against herbivores with antiparasitic and pesticide properties (neurotoxins); nornicotine serves as the precursor in the synthesis of the carcinogen compound N'-nitrosonornicotine (NNN). Required for the biosynthesis of putrescine. Catalyzes the first step of polyamine (PA) biosynthesis to produce putrescine from arginine. In Nicotiana tabacum (Common tobacco), this protein is Arginine decarboxylase 1A, chloroplastic.